The following is a 338-amino-acid chain: mRNA decay activator protein ZFP36L1 (338 aa).

The segment at 1-111 (MTTTLVSATI…QKQPGSGQVN (111 aa)) is necessary and sufficient for the association with mRNA decay enzymes and mRNA decay activation. Ser-54 carries the phosphoserine; by MAPKAPK2 modification. The residue at position 90 (Ser-90) is a Phosphoserine; by PKB/AKT1. A Phosphoserine; by PKB/AKT1 and MAPKAPK2 modification is found at Ser-92. The interval 93–113 (EGGERLLPTQKQPGSGQVNSS) is disordered. Polar residues predominate over residues 101–113 (TQKQPGSGQVNSS). C3H1-type zinc fingers lie at residues 114–142 (RYKT…HGIH) and 152–180 (KYKT…HNAE). Residues 185–338 (LAGGRDLSAD…IFSRLSISDD (154 aa)) are necessary for mRNA decay activation. Ser-203 carries the phosphoserine; by PKB/AKT1 and MAPKAPK2 modification. Residues 273–338 (SPTTFLFRPM…IFSRLSISDD (66 aa)) form a disordered region. Residues 305-318 (YLSSSSSSHSGSDS) show a composition bias toward low complexity. Phosphoserine is present on Ser-318. Residue Ser-334 is modified to Phosphoserine; by RPS6KA1.

As to quaternary structure, associates with the cytoplasmic CCR4-NOT deadenylase and RNA exosome complexes to trigger ARE-containing mRNA deadenylation and decay processes. Interacts with CNOT1. Interacts (via N-terminus) with CNOT6. Interacts with CNOT7; this interaction is inhibited in response to phorbol 12-myristate 13-acetate (PMA) treatment in a p38 MAPK-dependent manner. Interacts with DCP1A. Interacts (via N-terminus) with DCP2. Interacts (via N-terminus) with EXOSC2. Interacts with XRN1. Interacts (via phosphorylated form) with YWHAB; this interaction occurs in a protein kinase AKT1-dependent manner. Interacts (via phosphorylated form) with YWHAZ; this interaction occurs in a p38 MAPK- and AKT-signaling pathways. In terms of processing, phosphorylated. Phosphorylated by RPS6KA1 at Ser-334 upon phorbol 12-myristate 13-acetate (PMA) treatment; this phosphorylation results in dissociation of the CCR4-NOT deadenylase complex and induces p38 MAPK-mediated stabilization of the low-density lipoprotein receptor LDLR mRNA. Phosphorylated by protein kinase AKT1 at Ser-92 and Ser-203 in response to insulin; these phosphorylations stabilize ZFP36L1, increase the association with 14-3-3 proteins and mediate ARE-containing mRNA stabilization. AKT1-mediated phosphorylation at Ser-92 does not impair ARE-containing RNA-binding. Phosphorylated at Ser-54, Ser-92 and Ser-203 by MAPKAPK2; these phosphorylations increase the association with 14-3-3 proteins and mediate ARE-containing mRNA stabilization in a protein kinase AKT1-independent manner. MAPKAPK2-mediated phosphorylations at Ser-54, Ser-92 and Ser-203 do not impair ARE-containing RNA-binding. Phosphorylations increase the association with 14-3-3 proteins and mediate ARE-containing mRNA stabilization during early adipogenesis in a p38 MAPK- and AKT-dependent manner. Phosphorylated by protein kinase AKT1 at Ser-92. Ubiquitinated. Ubiquitination leads to proteasomal degradation, a process inhibited by phosphorylations at Ser-90, Ser-92 and Ser-203.

The protein resides in the nucleus. The protein localises to the cytoplasm. It localises to the cytoplasmic granule. It is found in the P-body. Zinc-finger RNA-binding protein that destabilizes several cytoplasmic AU-rich element (ARE)-containing mRNA transcripts by promoting their poly(A) tail removal or deadenylation, and hence provide a mechanism for attenuating protein synthesis. Acts as a 3'-untranslated region (UTR) ARE mRNA-binding adapter protein to communicate signaling events to the mRNA decay machinery. Functions by recruiting the CCR4-NOT deadenylase complex and components of the cytoplasmic RNA decay machinery to the bound ARE-containing mRNAs, and hence promotes ARE-mediated mRNA deadenylation and decay processes. Also induces the degradation of ARE-containing mRNAs even in absence of poly(A) tail. Binds to 3'-UTR ARE of numerous mRNAs. Positively regulates early adipogenesis by promoting ARE-mediated mRNA decay of immediate early genes (IEGs). Promotes ARE-mediated mRNA decay of mineralocorticoid receptor NR3C2 mRNA in response to hypertonic stress. Negatively regulates hematopoietic/erythroid cell differentiation by promoting ARE-mediated mRNA decay of the transcription factor STAT5B mRNA. Positively regulates monocyte/macrophage cell differentiation by promoting ARE-mediated mRNA decay of the cyclin-dependent kinase CDK6 mRNA. Promotes degradation of ARE-containing pluripotency-associated mRNAs in embryonic stem cells (ESCs), such as NANOG, through a fibroblast growth factor (FGF)-induced MAPK-dependent signaling pathway, and hence attenuates ESC self-renewal and positively regulates mesendoderm differentiation. May play a role in mediating pro-apoptotic effects in malignant B-cells by promoting ARE-mediated mRNA decay of BCL2 mRNA. In association with ZFP36L2 maintains quiescence on developing B lymphocytes by promoting ARE-mediated decay of several mRNAs encoding cell cycle regulators that help B cells progress through the cell cycle, and hence ensuring accurate variable-diversity-joining (VDJ) recombination and functional immune cell formation. Together with ZFP36L2 is also necessary for thymocyte development and prevention of T-cell acute lymphoblastic leukemia (T-ALL) transformation by promoting ARE-mediated mRNA decay of the oncogenic transcription factor NOTCH1 mRNA. Participates in the delivery of target ARE-mRNAs to processing bodies (PBs). In addition to its cytosolic mRNA-decay function, plays a role in the regulation of nuclear mRNA 3'-end processing; modulates mRNA 3'-end maturation efficiency of the DLL4 mRNA through binding with an ARE embedded in a weak noncanonical polyadenylation (poly(A)) signal in endothelial cells. Also involved in the regulation of stress granule (SG) and P-body (PB) formation and fusion. Plays a role in vasculogenesis and endocardial development. Plays a role in the regulation of keratinocyte proliferation, differentiation and apoptosis. Plays a role in myoblast cell differentiation. This chain is mRNA decay activator protein ZFP36L1, found in Rattus norvegicus (Rat).